The primary structure comprises 148 residues: MQISINELNFDDDSYQYMELLKQLTYIDPSIITNEMFEKQLSIIKNNPFHKIIVAKIDGKIVGSTTVLIEPKFIHNLSSVGHIEDVVVDQNYRLHGIGKLLIVKAIDICRQERCYKIILDCSDKVCGFYCKLGFTPKEKQMALYLNGK.

Positions 3-148 (ISINELNFDD…KQMALYLNGK (146 aa)) constitute an N-acetyltransferase domain. Residues threonine 25, 72–75 (KFIH), and 84–86 (EDV) contribute to the substrate site. Residues 86–88 (VVV) and 94–99 (LHGIGK) each bind acetyl-CoA. Substrate is bound by residues 115-116 (YK) and aspartate 120. Residue 129–131 (YCK) participates in acetyl-CoA binding. Glutamate 138 lines the substrate pocket.

Belongs to the acetyltransferase family. GNA1 subfamily.

The catalysed reaction is D-glucosamine 6-phosphate + acetyl-CoA = N-acetyl-D-glucosamine 6-phosphate + CoA + H(+). Its pathway is nucleotide-sugar biosynthesis; UDP-N-acetyl-alpha-D-glucosamine biosynthesis; N-acetyl-alpha-D-glucosamine 1-phosphate from alpha-D-glucosamine 6-phosphate (route I): step 1/2. The protein is Probable glucosamine 6-phosphate N-acetyltransferase of Acanthamoeba polyphaga (Amoeba).